The following is a 423-amino-acid chain: UPF0229 protein PSPPH_0628 (423 aa).

Residues 65-110 (HHGRGGKQTVVHPGNKEFTTGEHIARPQGGGGGKGPGKAGNSGEGM) are disordered. A compositionally biased stretch (gly residues) spans 92-107 (QGGGGGKGPGKAGNSG).

It belongs to the UPF0229 family.

The chain is UPF0229 protein PSPPH_0628 from Pseudomonas savastanoi pv. phaseolicola (strain 1448A / Race 6) (Pseudomonas syringae pv. phaseolicola (strain 1448A / Race 6)).